Reading from the N-terminus, the 273-residue chain is DnaJ homolog subfamily C member 27 (273 aa).

Residues 23-30 (GNAEVGKS), 71-75 (DMAGH), and 134-137 (NKVD) contribute to the GTP site. Positions 217 to 273 (DSWDMLGVKPGATREEVNKAYRKLAVLLHPDKCVAPGSEDAFKAVVNARTSLLKNIK) constitute a J domain.

It belongs to the small GTPase superfamily. Rab family.

The protein localises to the nucleus. Functionally, GTPase possibly involved in regulation of the MEK/ERK pathway. This is DnaJ homolog subfamily C member 27 (dnajc27) from Danio rerio (Zebrafish).